Reading from the N-terminus, the 328-residue chain is Eukaryotic translation initiation factor 3 subunit I (328 aa).

WD repeat units follow at residues 8 to 49 (GHER…GTYR), 50 to 89 (GHNG…ELFT), 146 to 185 (DGKK…LLKQ), 191 to 230 (GHKK…LLKT), and 288 to 327 (GHFG…FNIK).

The protein belongs to the eIF-3 subunit I family. As to quaternary structure, component of the eukaryotic translation initiation factor 3 (eIF-3) complex.

Its subcellular location is the cytoplasm. Functionally, component of the eukaryotic translation initiation factor 3 (eIF-3) complex, which is involved in protein synthesis of a specialized repertoire of mRNAs and, together with other initiation factors, stimulates binding of mRNA and methionyl-tRNAi to the 40S ribosome. The eIF-3 complex specifically targets and initiates translation of a subset of mRNAs involved in cell proliferation. The protein is Eukaryotic translation initiation factor 3 subunit I (TIF3I1) of Arabidopsis thaliana (Mouse-ear cress).